Reading from the N-terminus, the 313-residue chain is 4-hydroxy-3-methylbut-2-enyl diphosphate reductase (313 aa).

Position 12 (C12) interacts with [4Fe-4S] cluster. 2 residues coordinate (2E)-4-hydroxy-3-methylbut-2-enyl diphosphate: H41 and H74. Dimethylallyl diphosphate is bound by residues H41 and H74. Positions 41 and 74 each coordinate isopentenyl diphosphate. C96 is a [4Fe-4S] cluster binding site. H124 lines the (2E)-4-hydroxy-3-methylbut-2-enyl diphosphate pocket. H124 provides a ligand contact to dimethylallyl diphosphate. H124 contributes to the isopentenyl diphosphate binding site. The active-site Proton donor is the E126. T167 contributes to the (2E)-4-hydroxy-3-methylbut-2-enyl diphosphate binding site. Position 197 (C197) interacts with [4Fe-4S] cluster. Residues S225, S226, N227, and S269 each coordinate (2E)-4-hydroxy-3-methylbut-2-enyl diphosphate. Residues S225, S226, N227, and S269 each contribute to the dimethylallyl diphosphate site. Isopentenyl diphosphate is bound by residues S225, S226, N227, and S269.

The protein belongs to the IspH family. It depends on [4Fe-4S] cluster as a cofactor.

The catalysed reaction is isopentenyl diphosphate + 2 oxidized [2Fe-2S]-[ferredoxin] + H2O = (2E)-4-hydroxy-3-methylbut-2-enyl diphosphate + 2 reduced [2Fe-2S]-[ferredoxin] + 2 H(+). It catalyses the reaction dimethylallyl diphosphate + 2 oxidized [2Fe-2S]-[ferredoxin] + H2O = (2E)-4-hydroxy-3-methylbut-2-enyl diphosphate + 2 reduced [2Fe-2S]-[ferredoxin] + 2 H(+). It participates in isoprenoid biosynthesis; dimethylallyl diphosphate biosynthesis; dimethylallyl diphosphate from (2E)-4-hydroxy-3-methylbutenyl diphosphate: step 1/1. The protein operates within isoprenoid biosynthesis; isopentenyl diphosphate biosynthesis via DXP pathway; isopentenyl diphosphate from 1-deoxy-D-xylulose 5-phosphate: step 6/6. Functionally, catalyzes the conversion of 1-hydroxy-2-methyl-2-(E)-butenyl 4-diphosphate (HMBPP) into a mixture of isopentenyl diphosphate (IPP) and dimethylallyl diphosphate (DMAPP). Acts in the terminal step of the DOXP/MEP pathway for isoprenoid precursor biosynthesis. The sequence is that of 4-hydroxy-3-methylbut-2-enyl diphosphate reductase from Baumannia cicadellinicola subsp. Homalodisca coagulata.